A 198-amino-acid polypeptide reads, in one-letter code: 7-methyl-GTP pyrophosphatase (198 aa).

Residue Asp-75 is the Proton acceptor of the active site.

This sequence belongs to the Maf family. YceF subfamily. A divalent metal cation serves as cofactor.

It localises to the cytoplasm. The catalysed reaction is N(7)-methyl-GTP + H2O = N(7)-methyl-GMP + diphosphate + H(+). Nucleoside triphosphate pyrophosphatase that hydrolyzes 7-methyl-GTP (m(7)GTP). May have a dual role in cell division arrest and in preventing the incorporation of modified nucleotides into cellular nucleic acids. This chain is 7-methyl-GTP pyrophosphatase, found in Bartonella quintana (strain Toulouse) (Rochalimaea quintana).